The sequence spans 254 residues: Cell division protein DivIB (254 aa).

The Cytoplasmic segment spans residues 1–21 (MPNAQIPVLKKNRTKKRTSRK). Residues 22–42 (IAILLILLFIVLLAVLFFRSS) form a helical membrane-spanning segment. Residues 43–254 (LSRVSEIRFD…EEGQEKDTTQ (212 aa)) lie on the Extracellular side of the membrane. The region spanning 44 to 112 (SRVSEIRFDG…GIIAIHIKEF (69 aa)) is the POTRA domain.

Belongs to the FtsQ/DivIB family. DivIB subfamily.

It localises to the cell membrane. Functionally, cell division protein that may be involved in stabilizing or promoting the assembly of the division complex. The protein is Cell division protein DivIB of Paenibacillus polymyxa (strain E681).